Consider the following 429-residue polypeptide: Ribosomal RNA small subunit methyltransferase B (429 aa).

S-adenosyl-L-methionine contacts are provided by residues 254–260 (CAAPGGK), Asp-277, Asp-303, and Asp-322. The active-site Nucleophile is the Cys-375. The segment at 397–419 (ALSETGTPDQPGQQNLPGGEEGD) is disordered. Residues 400 to 412 (ETGTPDQPGQQNL) show a composition bias toward polar residues.

It belongs to the class I-like SAM-binding methyltransferase superfamily. RsmB/NOP family.

The protein localises to the cytoplasm. It carries out the reaction cytidine(967) in 16S rRNA + S-adenosyl-L-methionine = 5-methylcytidine(967) in 16S rRNA + S-adenosyl-L-homocysteine + H(+). In terms of biological role, specifically methylates the cytosine at position 967 (m5C967) of 16S rRNA. This Salmonella typhi protein is Ribosomal RNA small subunit methyltransferase B.